The following is a 351-amino-acid chain: Uroporphyrinogen decarboxylase (351 aa).

Substrate contacts are provided by residues 25–29 (RQAGR), aspartate 74, tyrosine 151, serine 206, and histidine 325.

This sequence belongs to the uroporphyrinogen decarboxylase family. As to quaternary structure, homodimer.

It is found in the cytoplasm. The catalysed reaction is uroporphyrinogen III + 4 H(+) = coproporphyrinogen III + 4 CO2. The protein operates within porphyrin-containing compound metabolism; protoporphyrin-IX biosynthesis; coproporphyrinogen-III from 5-aminolevulinate: step 4/4. In terms of biological role, catalyzes the decarboxylation of four acetate groups of uroporphyrinogen-III to yield coproporphyrinogen-III. The polypeptide is Uroporphyrinogen decarboxylase (Prosthecochloris aestuarii (strain DSM 271 / SK 413)).